The sequence spans 488 residues: Glutamyl-tRNA(Gln) amidotransferase subunit A (488 aa).

Active-site charge relay system residues include lysine 80 and serine 155. Residue serine 179 is the Acyl-ester intermediate of the active site.

The protein belongs to the amidase family. GatA subfamily. Heterotrimer of A, B and C subunits.

The enzyme catalyses L-glutamyl-tRNA(Gln) + L-glutamine + ATP + H2O = L-glutaminyl-tRNA(Gln) + L-glutamate + ADP + phosphate + H(+). In terms of biological role, allows the formation of correctly charged Gln-tRNA(Gln) through the transamidation of misacylated Glu-tRNA(Gln) in organisms which lack glutaminyl-tRNA synthetase. The reaction takes place in the presence of glutamine and ATP through an activated gamma-phospho-Glu-tRNA(Gln). This chain is Glutamyl-tRNA(Gln) amidotransferase subunit A, found in Chloroflexus aggregans (strain MD-66 / DSM 9485).